Here is a 207-residue protein sequence, read N- to C-terminus: Outer-membrane lipoprotein carrier protein (207 aa).

Positions 1 to 21 are cleaved as a signal peptide; sequence MRAIRMLLVSALALGTVTAYA.

Belongs to the LolA family. In terms of assembly, monomer.

It localises to the periplasm. In terms of biological role, participates in the translocation of lipoproteins from the inner membrane to the outer membrane. Only forms a complex with a lipoprotein if the residue after the N-terminal Cys is not an aspartate (The Asp acts as a targeting signal to indicate that the lipoprotein should stay in the inner membrane). This is Outer-membrane lipoprotein carrier protein from Pseudomonas putida (strain GB-1).